The primary structure comprises 319 residues: Acetyl esterase (319 aa).

Residues His-91–Gly-93 carry the Involved in the stabilization of the negatively charged intermediate by the formation of the oxyanion hole motif. Active-site residues include Ser-165, Asp-262, and His-292.

It belongs to the 'GDXG' lipolytic enzyme family. In terms of assembly, homodimer. Interacts with MalT and MelA.

Its subcellular location is the cytoplasm. In terms of biological role, displays esterase activity towards short chain fatty esters (acyl chain length of up to 8 carbons). Able to hydrolyze triacetylglycerol (triacetin) and tributyrylglycerol (tributyrin), but not trioleylglycerol (triolein) or cholesterol oleate. Negatively regulates MalT activity by antagonizing maltotriose binding. Inhibits MelA galactosidase activity. The protein is Acetyl esterase of Shigella flexneri serotype 5b (strain 8401).